The sequence spans 286 residues: Pyridoxal kinase PdxY (286 aa).

Substrate-binding positions include Ser9 and 44–45; that span reads MQ. Asp111, Glu147, and Lys180 together coordinate ATP. Residue Asp221 participates in substrate binding.

This sequence belongs to the pyridoxine kinase family. PdxY subfamily. In terms of assembly, homodimer. The cofactor is Mg(2+).

It catalyses the reaction pyridoxal + ATP = pyridoxal 5'-phosphate + ADP + H(+). The protein operates within cofactor metabolism; pyridoxal 5'-phosphate salvage; pyridoxal 5'-phosphate from pyridoxal: step 1/1. Its function is as follows. Pyridoxal kinase involved in the salvage pathway of pyridoxal 5'-phosphate (PLP). Catalyzes the phosphorylation of pyridoxal to PLP. The sequence is that of Pyridoxal kinase PdxY from Burkholderia lata (strain ATCC 17760 / DSM 23089 / LMG 22485 / NCIMB 9086 / R18194 / 383).